Here is a 323-residue protein sequence, read N- to C-terminus: AA9 family lytic polysaccharide monooxygenase B (323 aa).

An N-terminal signal peptide occupies residues 1–18 (MKSFTLTTLAALAGNAAA). Cu(2+)-binding residues include His-19 and His-97. An intrachain disulfide couples Cys-56 to Cys-191. 2 residues coordinate O2: His-177 and Gln-186. Residue Tyr-188 participates in Cu(2+) binding. One can recognise a CBM1 domain in the interval 286-323 (CTVQKYQQCGGQGYTGCTNCASGSTCSAVSPPYYSQCV).

This sequence belongs to the polysaccharide monooxygenase AA9 family. Cu(2+) is required as a cofactor.

It is found in the secreted. It carries out the reaction [(1-&gt;4)-beta-D-glucosyl]n+m + reduced acceptor + O2 = 4-dehydro-beta-D-glucosyl-[(1-&gt;4)-beta-D-glucosyl]n-1 + [(1-&gt;4)-beta-D-glucosyl]m + acceptor + H2O.. Is able to utilize various natural phenolic compounds as reducing agents. Most of these reducing agents are present in plants, either free or as lignin building blocks, such as sinapic acid, or as flavonoids such as catechin and dopamine. Phenolic compounds with 1,2-benzenediol and 1,2,3-benzenetriol moieties yield the highest release of oxidized and non-oxidized glucooligosaccharides from cellulose compared to monophenols or sulfur-containing compounds. Its function is as follows. Lytic polysaccharide monooxygenase (LPMO) that depolymerizes crystalline and amorphous polysaccharides via the oxidation of scissile alpha- or beta-(1-4)-glycosidic bonds, yielding C1 oxidation products. Catalysis by LPMOs requires the reduction of the active-site copper from Cu(II) to Cu(I) by a reducing agent and H(2)O(2) or O(2) as a cosubstrate. Is active on regenerated amorphous cellulose (RAC). This is AA9 family lytic polysaccharide monooxygenase B from Thermothelomyces thermophilus (strain ATCC 42464 / BCRC 31852 / DSM 1799) (Sporotrichum thermophile).